The sequence spans 89 residues: Small ribosomal subunit protein uS15 (89 aa).

This sequence belongs to the universal ribosomal protein uS15 family. Part of the 30S ribosomal subunit. Forms a bridge to the 50S subunit in the 70S ribosome, contacting the 23S rRNA.

One of the primary rRNA binding proteins, it binds directly to 16S rRNA where it helps nucleate assembly of the platform of the 30S subunit by binding and bridging several RNA helices of the 16S rRNA. In terms of biological role, forms an intersubunit bridge (bridge B4) with the 23S rRNA of the 50S subunit in the ribosome. This Marinobacter nauticus (strain ATCC 700491 / DSM 11845 / VT8) (Marinobacter aquaeolei) protein is Small ribosomal subunit protein uS15.